An 83-amino-acid chain; its full sequence is Phytosulfokines 4 (83 aa).

A signal peptide spans 1-28 (MAARTVAVAAALAVLLIFAASSATVAMA). The propeptide occupies 29-74 (GRPTPTTSLDEEAAQAAAQSEIGGGCKEGEGEEECLARRTLTAHTD). 2 positions are modified to sulfotyrosine: Y75 and Y77. A propeptide spanning residues 80–83 (QHHN) is cleaved from the precursor.

The protein belongs to the phytosulfokine family. Post-translationally, sulfation is important for activity and for the binding to a putative membrane receptor. In terms of processing, PSK-alpha is produced by endopeptidase digestion. PSK-beta is produced from PSK-alpha by exopeptidase digestion.

It is found in the secreted. Functionally, promotes plant cell differentiation, organogenesis and somatic embryogenesis as well as cell proliferation. This is Phytosulfokines 4 (PSK4) from Oryza sativa subsp. japonica (Rice).